A 97-amino-acid polypeptide reads, in one-letter code: Non-pathogenic pore-forming peptide amoebapore A (97 aa).

The N-terminal stretch at 1–20 is a signal peptide; it reads MKAIVFVLIFAVAFAVTLRQ. Positions 21 to 97 constitute a Saposin B-type domain; sequence GPIVCNLCTG…NAICAKIHAC (77 aa). 3 cysteine pairs are disulfide-bonded: Cys25/Cys97, Cys28/Cys91, and Cys55/Cys66.

Monomer. Homodimer. Hexamer; formed during insertion in the membrane.

Its subcellular location is the cytoplasmic granule. In terms of biological role, forms pores in the cell membrane of host cells. Implicated in the cytolytic activity of the parasite. Pore forming activity is lower compared to the activity of ameobapore A from the pathogenic strain HM-1:IMSS. The protein is Non-pathogenic pore-forming peptide amoebapore A of Entamoeba histolytica.